A 210-amino-acid chain; its full sequence is Putative 3-methyladenine DNA glycosylase (210 aa).

Belongs to the DNA glycosylase MPG family.

This is Putative 3-methyladenine DNA glycosylase from Lactobacillus helveticus (strain DPC 4571).